Consider the following 453-residue polypeptide: MRECISIHIGQAGIQVGNACWELYCLEHGIQPNGQMPADNTTGGGDDAFNTFFSETGAGKHVPRAVYVDLEPTVCDEVRTGSYRQLYHPEQIISGKEDAANNYARGHYTIGKEIVDIVLDRIRKLSDNCTGLQGFLVFHATGGGTGSGLGSLLLERLSVDYGRKSKLSFAITPAPQVATAVVEPYNSVLSTHALLEHTDCTFCLDNEALYDVCRRNLDIERPTYTNLNRLVAQVISSLTASLRFDGALNVDVTEFQTNLVPYPRIHFMLTSYAPIISAEKAYHEQLSVAEITNSVFEPAGMMTKCDPRHGKYMACCLMYRGDVVPKDVNAAVATIKTKRTIQFVDWCPTGFKCGINYQPPTAVPGGDLARVQRAVCMVANTTAIAEALSRIDHKFDLMYAKRAFVHWYVGEGMEEGEFSEAREDLVALEKDYEEVGAETADGDGEEEEFGEEY.

Q11, E71, G144, T145, T179, N206, and N228 together coordinate GTP. Position 71 (E71) interacts with Mg(2+). E254 is a catalytic residue. The disordered stretch occupies residues 433–453 (EEVGAETADGDGEEEEFGEEY).

The protein belongs to the tubulin family. As to quaternary structure, dimer of alpha and beta chains. A typical microtubule is a hollow water-filled tube with an outer diameter of 25 nm and an inner diameter of 15 nM. Alpha-beta heterodimers associate head-to-tail to form protofilaments running lengthwise along the microtubule wall with the beta-tubulin subunit facing the microtubule plus end conferring a structural polarity. Microtubules usually have 13 protofilaments but different protofilament numbers can be found in some organisms and specialized cells. Mg(2+) is required as a cofactor. Undergoes a tyrosination/detyrosination cycle, the cyclic removal and re-addition of a C-terminal tyrosine residue by the enzymes tubulin tyrosine carboxypeptidase (TTCP) and tubulin tyrosine ligase (TTL), respectively.

The protein resides in the cytoplasm. Its subcellular location is the cytoskeleton. It catalyses the reaction GTP + H2O = GDP + phosphate + H(+). Functionally, tubulin is the major constituent of microtubules, a cylinder consisting of laterally associated linear protofilaments composed of alpha- and beta-tubulin heterodimers. Microtubules grow by the addition of GTP-tubulin dimers to the microtubule end, where a stabilizing cap forms. Below the cap, tubulin dimers are in GDP-bound state, owing to GTPase activity of alpha-tubulin. This Pelvetia fastigiata (Brown alga) protein is Tubulin alpha-1 chain (TUBA1).